A 147-amino-acid polypeptide reads, in one-letter code: Hemoglobin subunit beta (147 aa).

The Globin domain maps to 3-147; that stretch reads NWTKTEKATI…VMSALGKQYH (145 aa). 2 residues coordinate heme b: His-64 and His-93.

This sequence belongs to the globin family. Heterotetramer of two alpha chains and two beta chains. As to expression, red blood cells.

In terms of biological role, involved in oxygen transport from gills to the various peripheral tissues. The chain is Hemoglobin subunit beta (hbb) from Gymnodraco acuticeps (Antarctic dragonfish).